Consider the following 319-residue polypeptide: tRNA-modifying protein YgfZ (319 aa).

2 residues coordinate folate: tryptophan 27 and tryptophan 189.

It belongs to the tRNA-modifying YgfZ family.

Its subcellular location is the cytoplasm. Folate-binding protein involved in regulating the level of ATP-DnaA and in the modification of some tRNAs. It is probably a key factor in regulatory networks that act via tRNA modification, such as initiation of chromosomal replication. The sequence is that of tRNA-modifying protein YgfZ from Buchnera aphidicola subsp. Schizaphis graminum (strain Sg).